The sequence spans 890 residues: DNA mismatch repair protein MutS (890 aa).

607–614 (GPNMSGKS) contributes to the ATP binding site. Residues 832 to 851 (ESQLSFFGTEQSSKKQDKPV) are disordered.

The protein belongs to the DNA mismatch repair MutS family.

This protein is involved in the repair of mismatches in DNA. It is possible that it carries out the mismatch recognition step. This protein has a weak ATPase activity. The chain is DNA mismatch repair protein MutS from Bacillus cereus (strain 03BB102).